The following is a 244-amino-acid chain: 3-deoxy-manno-octulosonate cytidylyltransferase (244 aa).

It belongs to the KdsB family.

The protein resides in the cytoplasm. It catalyses the reaction 3-deoxy-alpha-D-manno-oct-2-ulosonate + CTP = CMP-3-deoxy-beta-D-manno-octulosonate + diphosphate. It functions in the pathway nucleotide-sugar biosynthesis; CMP-3-deoxy-D-manno-octulosonate biosynthesis; CMP-3-deoxy-D-manno-octulosonate from 3-deoxy-D-manno-octulosonate and CTP: step 1/1. It participates in bacterial outer membrane biogenesis; lipopolysaccharide biosynthesis. Its function is as follows. Activates KDO (a required 8-carbon sugar) for incorporation into bacterial lipopolysaccharide in Gram-negative bacteria. This Dichelobacter nodosus (strain VCS1703A) protein is 3-deoxy-manno-octulosonate cytidylyltransferase.